Consider the following 115-residue polypeptide: NADH-ubiquinone oxidoreductase chain 3 (115 aa).

Helical transmembrane passes span 3-23, 55-75, and 87-107; these read LFIMLTMSSITVSIVVALNLL, FFMVGILFLLFDLEIAILLPL, and TITWAIIIFLFLFIGLAYEWL.

This sequence belongs to the complex I subunit 3 family.

Its subcellular location is the mitochondrion membrane. The enzyme catalyses a ubiquinone + NADH + 5 H(+)(in) = a ubiquinol + NAD(+) + 4 H(+)(out). Core subunit of the mitochondrial membrane respiratory chain NADH dehydrogenase (Complex I) that is believed to belong to the minimal assembly required for catalysis. Complex I functions in the transfer of electrons from NADH to the respiratory chain. The immediate electron acceptor for the enzyme is believed to be ubiquinone. The sequence is that of NADH-ubiquinone oxidoreductase chain 3 (MT-ND3) from Alligator mississippiensis (American alligator).